The primary structure comprises 114 residues: Vacuolar morphogenesis protein 10 (114 aa).

Its subcellular location is the vacuole membrane. Functionally, required for vacuolar fusion. Involved in the early steps of the fusion pathway. In Saccharomyces cerevisiae (strain ATCC 204508 / S288c) (Baker's yeast), this protein is Vacuolar morphogenesis protein 10 (VAM10).